Reading from the N-terminus, the 151-residue chain is Ribosome maturation factor RimP (151 aa).

Belongs to the RimP family.

It is found in the cytoplasm. Its function is as follows. Required for maturation of 30S ribosomal subunits. The sequence is that of Ribosome maturation factor RimP from Nitrosococcus oceani (strain ATCC 19707 / BCRC 17464 / JCM 30415 / NCIMB 11848 / C-107).